The sequence spans 286 residues: Structure-specific endonuclease subunit SLX1 (286 aa).

Positions 15–98 constitute a GIY-YIG domain; the sequence is SFYGVYILKS…QHAYQTRHIN (84 aa).

This sequence belongs to the SLX1 family. Forms a heterodimer with SLX4. A divalent metal cation serves as cofactor.

It is found in the nucleus. In terms of biological role, catalytic subunit of the SLX1-SLX4 structure-specific endonuclease that resolves DNA secondary structures generated during DNA repair and recombination. Has endonuclease activity towards branched DNA substrates, introducing single-strand cuts in duplex DNA close to junctions with ss-DNA. The sequence is that of Structure-specific endonuclease subunit SLX1 from Candida dubliniensis (strain CD36 / ATCC MYA-646 / CBS 7987 / NCPF 3949 / NRRL Y-17841) (Yeast).